The chain runs to 396 residues: Probable peptidoglycan glycosyltransferase FtsW (396 aa).

9 consecutive transmembrane segments (helical) span residues 17–37 (FCDG…WVMV), 61–81 (VFVL…MAWW), 83–103 (ANGP…LVAG), 117–137 (GIPL…VYLA), 159–179 (MVMA…AVVV), 198–218 (FLLL…AEPY), 274–294 (FVFA…VIGL), 316–336 (FAAY…FINI), and 350–370 (LPLL…VGML).

Belongs to the SEDS family. FtsW subfamily.

It is found in the cell inner membrane. It carries out the reaction [GlcNAc-(1-&gt;4)-Mur2Ac(oyl-L-Ala-gamma-D-Glu-L-Lys-D-Ala-D-Ala)](n)-di-trans,octa-cis-undecaprenyl diphosphate + beta-D-GlcNAc-(1-&gt;4)-Mur2Ac(oyl-L-Ala-gamma-D-Glu-L-Lys-D-Ala-D-Ala)-di-trans,octa-cis-undecaprenyl diphosphate = [GlcNAc-(1-&gt;4)-Mur2Ac(oyl-L-Ala-gamma-D-Glu-L-Lys-D-Ala-D-Ala)](n+1)-di-trans,octa-cis-undecaprenyl diphosphate + di-trans,octa-cis-undecaprenyl diphosphate + H(+). Its pathway is cell wall biogenesis; peptidoglycan biosynthesis. Peptidoglycan polymerase that is essential for cell division. The protein is Probable peptidoglycan glycosyltransferase FtsW of Halomonas elongata (strain ATCC 33173 / DSM 2581 / NBRC 15536 / NCIMB 2198 / 1H9).